Reading from the N-terminus, the 534-residue chain is Cytochalasin cluster regulator ccsR (534 aa).

The zn(2)-C6 fungal-type DNA-binding region spans 13–54 (CDRCRRQKLRCVRPLKHGACEHPNNIEALEPCERCSRAGTPC). Disordered regions lie at residues 88 to 170 (IPKQ…LDAP) and 350 to 378 (TSAR…SAAS). A compositionally biased stretch (polar residues) spans 109–125 (TGQNKGINDANAVTGSL). Positions 130 to 146 (PDHRSGSNVHRQPEARP) are enriched in basic and acidic residues. Over residues 361–378 (DMCASSSNRDSSDLSAAS) the composition is skewed to low complexity.

It localises to the nucleus. Transcription factor involved in regulation of gene cluster that mediates the biosynthesis of the mycotoxins cytochalasins E and K. The sequence is that of Cytochalasin cluster regulator ccsR from Aspergillus clavatus (strain ATCC 1007 / CBS 513.65 / DSM 816 / NCTC 3887 / NRRL 1 / QM 1276 / 107).